Reading from the N-terminus, the 108-residue chain is FK506-binding protein 1 (108 aa).

One can recognise a PPIase FKBP-type domain in the interval 20–108 (GDNVTIHYVG…KFEVELLKVN (89 aa)).

This sequence belongs to the FKBP-type PPIase family. FKBP1 subfamily.

It localises to the cytoplasm. The catalysed reaction is [protein]-peptidylproline (omega=180) = [protein]-peptidylproline (omega=0). With respect to regulation, inhibited by both FK506 and rapamycin. In terms of biological role, PPIases accelerate the folding of proteins. It catalyzes the cis-trans isomerization of proline imidic peptide bonds in oligopeptides. This chain is FK506-binding protein 1 (FRR1), found in Cryptococcus neoformans var. grubii serotype A (strain H99 / ATCC 208821 / CBS 10515 / FGSC 9487) (Filobasidiella neoformans var. grubii).